The chain runs to 254 residues: Alcohol dehydrogenase (254 aa).

Residue 10–33 (FVAGLGGIGLDTSREIVKSGPKNL) coordinates NAD(+). Ser138 lines the substrate pocket. Tyr151 (proton acceptor) is an active-site residue.

This sequence belongs to the short-chain dehydrogenases/reductases (SDR) family. In terms of assembly, homodimer.

The enzyme catalyses a primary alcohol + NAD(+) = an aldehyde + NADH + H(+). It carries out the reaction a secondary alcohol + NAD(+) = a ketone + NADH + H(+). The chain is Alcohol dehydrogenase (Adh) from Drosophila flavomontana (Fruit fly).